The primary structure comprises 498 residues: Putative BTB/POZ domain-containing protein L67 (498 aa).

The BTB domain maps to 26–96; that stretch reads SDINITLSDN…MYGISLSEIN (71 aa).

Belongs to the mimivirus BTB/WD family.

This Acanthamoeba polyphaga (Amoeba) protein is Putative BTB/POZ domain-containing protein L67.